Reading from the N-terminus, the 371-residue chain is Neuropeptide S receptor (371 aa).

Polar residues predominate over residues 1–21 (MPANFTEGSFDSSGTGQTLDS). The interval 1-22 (MPANFTEGSFDSSGTGQTLDSS) is disordered. At 1 to 52 (MPANFTEGSFDSSGTGQTLDSSPVACTETVTFTEVVEGKEWGSFYYSFKTEQ) the chain is on the extracellular side. Asn-4 carries an N-linked (GlcNAc...) asparagine glycan. Residues 53 to 73 (LITLWVLFVFTIVGNSVVLFS) traverse the membrane as a helical segment. Over 74-82 (TWRRKKKSR) the chain is Cytoplasmic. Residues 83–103 (MTFFVTQLAITDSFTGLVNIL) traverse the membrane as a helical segment. Over 104-123 (TDINWRFTGDFTAPDLVCRV) the chain is Extracellular. Cys-121 and Cys-197 are joined by a disulfide. Residues 124-144 (VRYLQVVLLYASTYVLVSLSI) traverse the membrane as a helical segment. At 145–164 (DRYHAIVYPMKFLQGEKQAR) the chain is on the cytoplasmic side. A helical membrane pass occupies residues 165 to 185 (VLIVIAWSLSFLFSIPTLIIF). The Extracellular segment spans residues 186-212 (GKRTLSNGEVQCWALWPDDSYWTPYMT). The chain crosses the membrane as a helical span at residues 213–233 (IVAFLVYFIPLTIISIMYGIV). The Cytoplasmic portion of the chain corresponds to 234–275 (IRTIWIKSKTYETVISNCSDGKLCSSYNRGLISKAKIKAIKY). A helical membrane pass occupies residues 276–296 (SIIIILAFICCWSPYFLFDIL). Over 297-312 (DNFNLLPDTQERFYAS) the chain is Extracellular. Residues 313–333 (VIIQNLPALNSAINPLIYCVF) form a helical membrane-spanning segment. At 334-371 (SSSISFPCREQRSQDSRMTFRERTERHEMQILSKPEFI) the chain is on the cytoplasmic side.

This sequence belongs to the G-protein coupled receptor 1 family. Vasopressin/oxytocin receptor subfamily. In terms of tissue distribution, isoform 4 is ubiquitous; it is detected in glandular epithelia of bronchus, stomach, small intestine, colon, uterus, esophagus, spleen, kidney, pancreas, prostate and breast. Isoform 1 is detected in uterus, colon and prostate, and in the smooth muscle cell layer in bronchial and arterial walls (at protein level). Isoform 1 is predominantly expressed in smooth muscle. Isoform 4 is predominantly expressed in epithelial cells. In bronchial biopsies, it is expressed in smooth muscle cells of asthma patients, but not in control patients; whereas in epithelial cells, its expression is consistently stronger in asthma patients.

It localises to the cell membrane. It is found in the cytoplasm. Its function is as follows. G-protein coupled receptor for neuropeptide S (NPS). Promotes mobilization of intracellular Ca(2+) stores. Inhibits cell growth in response to NPS binding. Involved in pathogenesis of asthma and other IgE-mediated diseases. In Homo sapiens (Human), this protein is Neuropeptide S receptor (NPSR1).